The primary structure comprises 535 residues: Sucrose transport protein SUT5 (535 aa).

At methionine 1 to arginine 53 the chain is on the cytoplasmic side. A helical transmembrane segment spans residues leucine 54–leucine 74. Topologically, residues leucine 75–serine 87 are extracellular. A helical membrane pass occupies residues tyrosine 88–glycine 108. Residues tyrosine 109–arginine 122 are Cytoplasmic-facing. The chain crosses the membrane as a helical span at residues proline 123–alanine 143. Over aspartate 144–arginine 163 the chain is Extracellular. Residues tryptophan 164–valine 184 form a helical membrane-spanning segment. The Cytoplasmic segment spans residues glutamine 185–asparagine 203. Residues valine 204–glycine 224 form a helical membrane-spanning segment. Topologically, residues alanine 225 to lysine 249 are extracellular. Residues glycine 250–alanine 270 traverse the membrane as a helical segment. Topologically, residues aspartate 271–proline 302 are cytoplasmic. Residues proline 303–isoleucine 323 form a helical membrane-spanning segment. Topologically, residues glutamine 324–arginine 354 are extracellular. A helical transmembrane segment spans residues glutamate 355 to proline 375. Topologically, residues lysine 376–lysine 384 are cytoplasmic. A helical transmembrane segment spans residues valine 385–glycine 405. At methionine 406–alanine 429 the chain is on the extracellular side. Residues valine 430–tryptophan 450 form a helical membrane-spanning segment. At alanine 451–glycine 465 the chain is on the cytoplasmic side. Residues leucine 466 to alanine 486 form a helical membrane-spanning segment. At glycine 487–threonine 498 the chain is on the extracellular side. A helical membrane pass occupies residues proline 499 to leucine 519. The Cytoplasmic portion of the chain corresponds to proline 520–histidine 535.

Belongs to the glycoside-pentoside-hexuronide (GPH) cation symporter transporter (TC 2.A.2.4) family. Homodimer. As to expression, widely expressed. Highest expression in sink leaves and lowest in germinating seeds.

Its subcellular location is the cell membrane. Its pathway is glycan biosynthesis; sucrose metabolism. Its function is as follows. Responsible for the transport of sucrose into the cell, with the concomitant uptake of protons (symport system). Can also transport other glucosides such as maltose, arbutin, salicin, helicin, alpha-phenylglucoside and beta-phenylglucoside. The sequence is that of Sucrose transport protein SUT5 (SUT5) from Oryza sativa subsp. japonica (Rice).